The chain runs to 348 residues: Malyl-CoA/beta-methylmalyl-CoA/citramalyl-CoA lyase (348 aa).

Substrate-binding positions include 32–33, Lys-40, and Arg-92; that span reads HF. 2 residues coordinate Mg(2+): Glu-157 and Asp-184. Residues 183 to 184 and Leu-274 contribute to the substrate site; that span reads AD.

This sequence belongs to the HpcH/HpaI aldolase family. As to quaternary structure, homohexamer. Dimer of trimers. Mg(2+) serves as cofactor. Requires Mn(2+) as cofactor.

The enzyme catalyses (S)-malyl-CoA = glyoxylate + acetyl-CoA. It carries out the reaction (2R,3S)-beta-methylmalyl-CoA = propanoyl-CoA + glyoxylate. The catalysed reaction is (3S)-citramalyl-CoA = pyruvate + acetyl-CoA. With respect to regulation, inhibited by oxalate. In terms of biological role, involved in the 3-hydroxypropionate cycle used for autotrophic carbon dioxide fixation, and in the glyoxylate assimilation cycle used to regenerate acetyl-CoA and produce pyruvate as universal precursor for biosynthesis. As a part of the 3-hydroxypropionate cycle, it catalyzes the cleavage of (S)-malyl-CoA to yield acetyl-CoA and glyoxylate. As part of the glyoxylate assimilation cycle, it catalyzes the condensation of glyoxylate with propionyl-CoA to yield (2R,3S)-beta-methylmalyl-CoA, and catalyzes the cleavage of (S)-citramalyl-CoA to yield acetyl-CoA and pyruvate. The chain is Malyl-CoA/beta-methylmalyl-CoA/citramalyl-CoA lyase (mcl) from Chloroflexus aurantiacus.